A 172-amino-acid polypeptide reads, in one-letter code: Adenine phosphoribosyltransferase (172 aa).

The protein belongs to the purine/pyrimidine phosphoribosyltransferase family. Homodimer.

The protein localises to the cytoplasm. It carries out the reaction AMP + diphosphate = 5-phospho-alpha-D-ribose 1-diphosphate + adenine. The protein operates within purine metabolism; AMP biosynthesis via salvage pathway; AMP from adenine: step 1/1. Its function is as follows. Catalyzes a salvage reaction resulting in the formation of AMP, that is energically less costly than de novo synthesis. The chain is Adenine phosphoribosyltransferase from Streptococcus mutans serotype c (strain ATCC 700610 / UA159).